A 338-amino-acid chain; its full sequence is Large ribosomal subunit protein uL10 (338 aa).

The disordered stretch occupies residues Leu292–Phe338. Basic and acidic residues predominate over residues Glu308 to Glu318. Over residues Lys319–Ala329 the composition is skewed to acidic residues.

Belongs to the universal ribosomal protein uL10 family. Part of the 50S ribosomal subunit. Forms part of the ribosomal stalk which helps the ribosome interact with GTP-bound translation factors. Forms a heptameric L10(L12)2(L12)2(L12)2 complex, where L10 forms an elongated spine to which the L12 dimers bind in a sequential fashion.

In terms of biological role, forms part of the ribosomal stalk, playing a central role in the interaction of the ribosome with GTP-bound translation factors. The protein is Large ribosomal subunit protein uL10 of Methanococcus aeolicus (strain ATCC BAA-1280 / DSM 17508 / OCM 812 / Nankai-3).